Here is a 168-residue protein sequence, read N- to C-terminus: Probable chorismate pyruvate-lyase (168 aa).

Substrate contacts are provided by Arg75, Ile114, and Glu155.

Belongs to the UbiC family.

Its subcellular location is the cytoplasm. The enzyme catalyses chorismate = 4-hydroxybenzoate + pyruvate. Its pathway is cofactor biosynthesis; ubiquinone biosynthesis. Removes the pyruvyl group from chorismate, with concomitant aromatization of the ring, to provide 4-hydroxybenzoate (4HB) for the ubiquinone pathway. The polypeptide is Probable chorismate pyruvate-lyase (Psychrobacter cryohalolentis (strain ATCC BAA-1226 / DSM 17306 / VKM B-2378 / K5)).